Reading from the N-terminus, the 436-residue chain is Eukaryotic peptide chain release factor subunit 1 (436 aa).

It belongs to the eukaryotic release factor 1 family. As to quaternary structure, heterodimer of two subunits, one of which binds GTP.

It is found in the cytoplasm. In terms of biological role, directs the termination of nascent peptide synthesis (translation) in response to the termination codons UAA and UAG. In B.musculus UGA codes for tryptophan. This Blepharisma musculus protein is Eukaryotic peptide chain release factor subunit 1 (eRF1).